Here is a 289-residue protein sequence, read N- to C-terminus: 4-hydroxy-3-methylbut-2-enyl diphosphate reductase (289 aa).

Cys12 contacts [4Fe-4S] cluster. (2E)-4-hydroxy-3-methylbut-2-enyl diphosphate is bound by residues His44 and His81. Residues His44 and His81 each coordinate dimethylallyl diphosphate. His44 and His81 together coordinate isopentenyl diphosphate. Cys103 provides a ligand contact to [4Fe-4S] cluster. His130 serves as a coordination point for (2E)-4-hydroxy-3-methylbut-2-enyl diphosphate. His130 is a dimethylallyl diphosphate binding site. His130 is an isopentenyl diphosphate binding site. Glu132 acts as the Proton donor in catalysis. Thr174 serves as a coordination point for (2E)-4-hydroxy-3-methylbut-2-enyl diphosphate. Cys202 contacts [4Fe-4S] cluster. 3 residues coordinate (2E)-4-hydroxy-3-methylbut-2-enyl diphosphate: Ser230, Asn232, and Ser273. The dimethylallyl diphosphate site is built by Ser230, Asn232, and Ser273. Isopentenyl diphosphate is bound by residues Ser230, Asn232, and Ser273.

The protein belongs to the IspH family. The cofactor is [4Fe-4S] cluster.

The catalysed reaction is isopentenyl diphosphate + 2 oxidized [2Fe-2S]-[ferredoxin] + H2O = (2E)-4-hydroxy-3-methylbut-2-enyl diphosphate + 2 reduced [2Fe-2S]-[ferredoxin] + 2 H(+). The enzyme catalyses dimethylallyl diphosphate + 2 oxidized [2Fe-2S]-[ferredoxin] + H2O = (2E)-4-hydroxy-3-methylbut-2-enyl diphosphate + 2 reduced [2Fe-2S]-[ferredoxin] + 2 H(+). It participates in isoprenoid biosynthesis; dimethylallyl diphosphate biosynthesis; dimethylallyl diphosphate from (2E)-4-hydroxy-3-methylbutenyl diphosphate: step 1/1. It functions in the pathway isoprenoid biosynthesis; isopentenyl diphosphate biosynthesis via DXP pathway; isopentenyl diphosphate from 1-deoxy-D-xylulose 5-phosphate: step 6/6. Its function is as follows. Catalyzes the conversion of 1-hydroxy-2-methyl-2-(E)-butenyl 4-diphosphate (HMBPP) into a mixture of isopentenyl diphosphate (IPP) and dimethylallyl diphosphate (DMAPP). Acts in the terminal step of the DOXP/MEP pathway for isoprenoid precursor biosynthesis. This is 4-hydroxy-3-methylbut-2-enyl diphosphate reductase from Treponema denticola (strain ATCC 35405 / DSM 14222 / CIP 103919 / JCM 8153 / KCTC 15104).